The primary structure comprises 1875 residues: Protein MLP1 (1875 aa).

N-acetylserine is present on Ser-2. 2 coiled-coil regions span residues 69–487 and 531–1678; these read ELKA…IQYL and ERLV…SAES. Thr-337 is modified (phosphothreonine). Ser-379 is modified (phosphoserine). The Required for nuclear localization motif lies at 1496–1565; that stretch reads QPSNINMEEI…EEKVEERIKS (70 aa). Residues 1641-1689 form a disordered region; that stretch reads KKSFDEGKQQAMMKTTLLERKLAKMESQLSETKQSAESPPKSVNNVQNP. Residues 1667–1688 show a composition bias toward polar residues; the sequence is SQLSETKQSAESPPKSVNNVQN. Residues Ser-1670 and Ser-1710 each carry the phosphoserine modification. Residues 1716–1725 are compositionally biased toward low complexity; that stretch reads KLNSKSSSGG. The interval 1716 to 1875 is disordered; that stretch reads KLNSKSSSGG…TDKVNDENSI (160 aa). Residues 1728 to 1737 are compositionally biased toward polar residues; that stretch reads PFTSPSPNKH. A Phosphoserine modification is found at Ser-1733. Over residues 1738 to 1748 the composition is skewed to basic and acidic residues; it reads LQNDNDKRESL. A compositionally biased stretch (polar residues) spans 1787 to 1801; the sequence is TSNNPAQKDSSNRNV. A Phosphoserine modification is found at Ser-1803. Basic and acidic residues-rich tracts occupy residues 1807-1840 and 1865-1875; these read TEKKKEGEPVKRGEAIEEQTKSNKRPIDEVGELK and ETDKVNDENSI. A coiled-coil region spans residues 1834–1866; it reads DEVGELKNDEDDTTENINESKKIKTEDEEEKET.

Component of the nuclear pore complex (NPC). NPC constitutes the exclusive means of nucleocytoplasmic transport. NPCs allow the passive diffusion of ions and small molecules and the active, nuclear transport receptor-mediated bidirectional transport of macromolecules such as proteins, RNAs, ribonucleoparticles (RNPs), and ribosomal subunits across the nuclear envelope. Due to its 8-fold rotational symmetry, all subunits are present with 8 copies or multiples thereof. Interacts with NAB2, a hnRNP required for mRNA export. Interacts with MLP2. In terms of processing, may be phosphorylated by CDC28.

Its subcellular location is the nucleus. It is found in the nuclear pore complex. In terms of biological role, together with the closely related MLP2, involved in the structural and functional organization of perinuclear chromatin. Together with MLP2, associates with the nuclear pore complex and form filamentous structures along the nuclear periphery. Has a role in the localization of Esc1 to nucleolar regions. Together with MLP2, mediates tethering of the some telomeres to the nuclear periphery, probably mediated by YKU70/YKU80 (HDF1/HDF2) heterodimer and show perinuclear location dependent silencing. MLP1 and MLP2 are involved in telomere length regulation but not silencing or telomere anchoring. Recognizes the 5'-splice site of pre-mRNAs and retains unspliced pre-mRNA in the nucleus without affecting splicing itself. The protein is Protein MLP1 (MLP1) of Saccharomyces cerevisiae (strain ATCC 204508 / S288c) (Baker's yeast).